Here is a 350-residue protein sequence, read N- to C-terminus: UDP-glucose 4-epimerase 2 (350 aa).

NAD(+) is bound by residues 12–14, 33–37, 63–64, F85, and K89; these read GYI, DNYDN, and DL. 129–131 contributes to the substrate binding site; it reads SAT. Y153 functions as the Proton acceptor in the catalytic mechanism. NAD(+) contacts are provided by K157 and Y181. Residues 181–183, 202–204, 220–222, R235, and 297–300 each bind substrate; these read YFN, NNL, TVF, and RPGD.

Belongs to the NAD(P)-dependent epimerase/dehydratase family. Forms homodimers and heterodimers. NAD(+) serves as cofactor. Widely expressed. Most highly expressed in stems and flowers.

It is found in the cytoplasm. It carries out the reaction UDP-alpha-D-glucose = UDP-alpha-D-galactose. The protein operates within carbohydrate metabolism; galactose metabolism. With respect to regulation, enhanced activity by NaCl. Enhanced activity by NAD(+). Strongly inhibited by UDP. Its function is as follows. Catalyzes the interconversion between UDP-glucose and UDP-galactose. Cooperates with UGE3 in pollen development and with UGE4 in cell wall carbohydrate biosynthesis and growth. The polypeptide is UDP-glucose 4-epimerase 2 (Arabidopsis thaliana (Mouse-ear cress)).